Here is a 224-residue protein sequence, read N- to C-terminus: Response regulator protein GraR (224 aa).

A Response regulatory domain is found at 2–115 (QILLVEDDNT…VLIAKLQAIY (114 aa)). Position 51 is a 4-aspartylphosphate (aspartate 51). The ompR/PhoB-type DNA-binding region spans 126-224 (KRTLTWQDAV…KVGKGYMAHE (99 aa)). A phosphothreonine mark is found at threonine 128, threonine 130, and threonine 149.

In terms of assembly, interacts with GraX. In terms of processing, phosphorylated by GraS. Phosphorylated by Stk1; phosphorylation increases the DNA-binding activity of GraR.

It is found in the cytoplasm. Its function is as follows. Member of the two-component regulatory system GraR/GraS involved in resistance against cationic antimicrobial peptides (CAMPs). Upon phosphorylation by GraS, functions as a transcription regulator by direct binding to promoter regions of target genes such as adhesins, exoproteins, transporters, toxins, and proteins involved in cell wall synthesis. Down-regulates the expression of many genes involved in RNA and amino acid synthesis or glycolysis. In Staphylococcus aureus (strain Mu50 / ATCC 700699), this protein is Response regulator protein GraR (graR).